We begin with the raw amino-acid sequence, 1153 residues long: PPi-type phosphoenolpyruvate carboxykinase 2 (1153 aa).

The stretch at 1085 to 1131 (RQKLEVAKLNKDLAYLNKTIAEKPRLVETLNKQIAAVKEELQYVSSE) forms a coiled coil.

Belongs to the PPi-type phosphoenolpyruvate carboxykinase family. As to quaternary structure, monomer and trimer; forms heterotrimers with PEPCK1 and PEPCK3.

It is found in the cytoplasm. Its subcellular location is the cytosol. The enzyme catalyses oxaloacetate + diphosphate = phosphoenolpyruvate + phosphate + CO2. Functionally, inorganic pyrophosphate (PPi)-dependent phosphoenolpyruvate carboxykinase, which regulates the carbon flow of the central metabolism by fixing CO(2) to phosphoenolpyruvate to produce oxaloacetate. Can also produce pyruvate and diphosphate from phosphoenolpyruvate and phosphate. This Entamoeba histolytica (strain ATCC 30459 / HM-1:IMSS / ABRM) protein is PPi-type phosphoenolpyruvate carboxykinase 2.